A 333-amino-acid chain; its full sequence is Fructose-1,6-bisphosphatase class 1 (333 aa).

The Mg(2+) site is built by Glu92, Asp113, Leu115, and Asp116. Residues 116 to 119 (DGSS), Asn209, Tyr242, and Lys272 each bind substrate. Glu278 serves as a coordination point for Mg(2+).

This sequence belongs to the FBPase class 1 family. As to quaternary structure, homotetramer. Requires Mg(2+) as cofactor.

The protein localises to the cytoplasm. It catalyses the reaction beta-D-fructose 1,6-bisphosphate + H2O = beta-D-fructose 6-phosphate + phosphate. It functions in the pathway carbohydrate biosynthesis; Calvin cycle. The protein is Fructose-1,6-bisphosphatase class 1 of Chlorobaculum tepidum (strain ATCC 49652 / DSM 12025 / NBRC 103806 / TLS) (Chlorobium tepidum).